The chain runs to 298 residues: ATP synthase gamma chain (298 aa).

This sequence belongs to the ATPase gamma chain family. F-type ATPases have 2 components, CF(1) - the catalytic core - and CF(0) - the membrane proton channel. CF(1) has five subunits: alpha(3), beta(3), gamma(1), delta(1), epsilon(1). CF(0) has three main subunits: a, b and c.

The protein localises to the cell inner membrane. Its function is as follows. Produces ATP from ADP in the presence of a proton gradient across the membrane. The gamma chain is believed to be important in regulating ATPase activity and the flow of protons through the CF(0) complex. This chain is ATP synthase gamma chain, found in Francisella tularensis subsp. holarctica (strain FTNF002-00 / FTA).